A 347-amino-acid polypeptide reads, in one-letter code: GMP reductase (347 aa).

Position 108–131 (108–131 (DDFTKTRQILAMSSALRFICVDVA)) interacts with NADP(+). Residues Gly181 and Gly183 each contribute to the K(+) site. The Thioimidate intermediate role is filled by Cys186. 216–239 (IVGDGGCTCPGDVAKAFGGGADFV) is a binding site for NADP(+).

It belongs to the IMPDH/GMPR family. GuaC type 1 subfamily. As to quaternary structure, homotetramer.

The enzyme catalyses IMP + NH4(+) + NADP(+) = GMP + NADPH + 2 H(+). Its function is as follows. Catalyzes the irreversible NADPH-dependent deamination of GMP to IMP. It functions in the conversion of nucleobase, nucleoside and nucleotide derivatives of G to A nucleotides, and in maintaining the intracellular balance of A and G nucleotides. This Aeromonas hydrophila subsp. hydrophila (strain ATCC 7966 / DSM 30187 / BCRC 13018 / CCUG 14551 / JCM 1027 / KCTC 2358 / NCIMB 9240 / NCTC 8049) protein is GMP reductase.